We begin with the raw amino-acid sequence, 251 residues long: Ditrans,polycis-undecaprenyl-diphosphate synthase ((2E,6E)-farnesyl-diphosphate specific) (251 aa).

The active site involves D19. D19 lines the Mg(2+) pocket. Residues G20 to R23, W24, H36, and S64 to E66 contribute to the substrate site. N67 acts as the Proton acceptor in catalysis. Residues W68, R70, R187, and R193–S195 contribute to the substrate site. Mg(2+) is bound at residue E206.

The protein belongs to the UPP synthase family. Homodimer. Requires Mg(2+) as cofactor.

The enzyme catalyses 8 isopentenyl diphosphate + (2E,6E)-farnesyl diphosphate = di-trans,octa-cis-undecaprenyl diphosphate + 8 diphosphate. Functionally, catalyzes the sequential condensation of isopentenyl diphosphate (IPP) with (2E,6E)-farnesyl diphosphate (E,E-FPP) to yield (2Z,6Z,10Z,14Z,18Z,22Z,26Z,30Z,34E,38E)-undecaprenyl diphosphate (di-trans,octa-cis-UPP). UPP is the precursor of glycosyl carrier lipid in the biosynthesis of bacterial cell wall polysaccharide components such as peptidoglycan and lipopolysaccharide. This is Ditrans,polycis-undecaprenyl-diphosphate synthase ((2E,6E)-farnesyl-diphosphate specific) from Pseudomonas aeruginosa (strain ATCC 15692 / DSM 22644 / CIP 104116 / JCM 14847 / LMG 12228 / 1C / PRS 101 / PAO1).